The following is a 278-amino-acid chain: Large ribosomal subunit protein uL2 (278 aa).

Disordered stretches follow at residues 33-53 and 221-278; these read LTEGKRKTGGRNNKGHVTSRG and RGVA…KKKR. Basic residues predominate over residues 269–278; that stretch reads IRSRHAKKKR.

Belongs to the universal ribosomal protein uL2 family. As to quaternary structure, part of the 50S ribosomal subunit. Forms a bridge to the 30S subunit in the 70S ribosome.

Its function is as follows. One of the primary rRNA binding proteins. Required for association of the 30S and 50S subunits to form the 70S ribosome, for tRNA binding and peptide bond formation. It has been suggested to have peptidyltransferase activity; this is somewhat controversial. Makes several contacts with the 16S rRNA in the 70S ribosome. This chain is Large ribosomal subunit protein uL2, found in Novosphingobium aromaticivorans (strain ATCC 700278 / DSM 12444 / CCUG 56034 / CIP 105152 / NBRC 16084 / F199).